Reading from the N-terminus, the 160-residue chain is Large ribosomal subunit protein uL22c (160 aa).

It belongs to the universal ribosomal protein uL22 family. Part of the 50S ribosomal subunit.

The protein resides in the plastid. Its subcellular location is the chloroplast. In terms of biological role, this protein binds specifically to 23S rRNA. Its function is as follows. The globular domain of the protein is located near the polypeptide exit tunnel on the outside of the subunit, while an extended beta-hairpin is found that lines the wall of the exit tunnel in the center of the 70S ribosome. The protein is Large ribosomal subunit protein uL22c (rpl22) of Panax ginseng (Korean ginseng).